The following is a 159-amino-acid chain: Nucleotide-binding protein PSPA7_4966 (159 aa).

This sequence belongs to the YajQ family.

In terms of biological role, nucleotide-binding protein. This is Nucleotide-binding protein PSPA7_4966 from Pseudomonas paraeruginosa (strain DSM 24068 / PA7) (Pseudomonas aeruginosa (strain PA7)).